The sequence spans 476 residues: Inosine-5'-monophosphate dehydrogenase (476 aa).

CBS domains are found at residues 92–150 (MIEN…IADV) and 151–207 (MTKD…PNAS). NAD(+)-binding positions include Asp-244 and 294-296 (GVG). Residues Gly-296 and Gly-298 each contribute to the K(+) site. Residue Ser-299 coordinates IMP. Cys-301 lines the K(+) pocket. Cys-301 functions as the Thioimidate intermediate in the catalytic mechanism. Residues 334–336 (DGG), 357–358 (GS), 381–385 (YRGMA), and Glu-413 each bind IMP. Glu-467 and Ser-468 together coordinate K(+).

The protein belongs to the IMPDH/GMPR family. As to quaternary structure, homotetramer. It depends on K(+) as a cofactor.

It catalyses the reaction IMP + NAD(+) + H2O = XMP + NADH + H(+). It functions in the pathway purine metabolism; XMP biosynthesis via de novo pathway; XMP from IMP: step 1/1. Mycophenolic acid (MPA) is a non-competitive inhibitor that prevents formation of the closed enzyme conformation by binding to the same site as the amobile flap. In contrast, mizoribine monophosphate (MZP) is a competitive inhibitor that induces the closed conformation. MPA is a potent inhibitor of mammalian IMPDHs but a poor inhibitor of the bacterial enzymes. MZP is a more potent inhibitor of bacterial IMPDH. Functionally, catalyzes the conversion of inosine 5'-phosphate (IMP) to xanthosine 5'-phosphate (XMP), the first committed and rate-limiting step in the de novo synthesis of guanine nucleotides, and therefore plays an important role in the regulation of cell growth. The protein is Inosine-5'-monophosphate dehydrogenase of Nitrosopumilus maritimus (strain SCM1).